A 154-amino-acid polypeptide reads, in one-letter code: 6,7-dimethyl-8-ribityllumazine synthase (154 aa).

Residues F26, 60–62 (ALE), and 84–86 (CII) each bind 5-amino-6-(D-ribitylamino)uracil. 89–90 (ET) contributes to the (2S)-2-hydroxy-3-oxobutyl phosphate binding site. Catalysis depends on H92, which acts as the Proton donor. N117 contributes to the 5-amino-6-(D-ribitylamino)uracil binding site. R131 contributes to the (2S)-2-hydroxy-3-oxobutyl phosphate binding site.

The protein belongs to the DMRL synthase family.

It carries out the reaction (2S)-2-hydroxy-3-oxobutyl phosphate + 5-amino-6-(D-ribitylamino)uracil = 6,7-dimethyl-8-(1-D-ribityl)lumazine + phosphate + 2 H2O + H(+). It functions in the pathway cofactor biosynthesis; riboflavin biosynthesis; riboflavin from 2-hydroxy-3-oxobutyl phosphate and 5-amino-6-(D-ribitylamino)uracil: step 1/2. Functionally, catalyzes the formation of 6,7-dimethyl-8-ribityllumazine by condensation of 5-amino-6-(D-ribitylamino)uracil with 3,4-dihydroxy-2-butanone 4-phosphate. This is the penultimate step in the biosynthesis of riboflavin. The sequence is that of 6,7-dimethyl-8-ribityllumazine synthase from Acidovorax sp. (strain JS42).